The chain runs to 449 residues: Intestinal acid phosphatase (449 aa).

Residues 1 to 19 (MVSAISIVAIFALEGFVTT) form the signal peptide. Residues 20–428 (YSDGTKDLVF…TDLNKSSSFA (409 aa)) are Extracellular-facing. The active-site Nucleophile is the His36. The active-site Proton donor is Asp321. The chain crosses the membrane as a helical span at residues 429-449 (TVSMLFIAAILAINNNFLGLF).

Belongs to the histidine acid phosphatase family. Homodimer. In terms of processing, the N-terminus is blocked. In terms of tissue distribution, expressed in the intestine, specifically on the edge of the gut lumen, in the 14 posterior cells of the intestine.

Its subcellular location is the membrane. It catalyses the reaction a phosphate monoester + H2O = an alcohol + phosphate. Its function is as follows. Acid phosphatase required for normal growth and development. Specifically required for normal gut differentiation. The sequence is that of Intestinal acid phosphatase from Caenorhabditis elegans.